A 225-amino-acid chain; its full sequence is Glutathione S-transferase zeta class (225 aa).

The region spanning 10–91 (PKLKLYSYFR…YLEEKYPEHP (82 aa)) is the GST N-terminal domain. Glutathione-binding positions include 20-25 (SSCSFR), glutamine 49, valine 63, 75-76 (DS), glutamine 115, and 119-121 (NLA). Residues 96–221 (DIHKKAINYQ…MPDKQPDSTS (126 aa)) enclose the GST C-terminal domain.

It belongs to the GST superfamily. Zeta family.

The protein resides in the cytoplasm. It carries out the reaction RX + glutathione = an S-substituted glutathione + a halide anion + H(+). This Euphorbia esula (Leafy spurge) protein is Glutathione S-transferase zeta class.